The following is a 289-amino-acid chain: 4-diphosphocytidyl-2-C-methyl-D-erythritol kinase (289 aa).

Lys10 is an active-site residue. Position 94–104 (94–104 (PVAAGLAGGSS)) interacts with ATP. Asp136 is an active-site residue.

The protein belongs to the GHMP kinase family. IspE subfamily.

It carries out the reaction 4-CDP-2-C-methyl-D-erythritol + ATP = 4-CDP-2-C-methyl-D-erythritol 2-phosphate + ADP + H(+). The protein operates within isoprenoid biosynthesis; isopentenyl diphosphate biosynthesis via DXP pathway; isopentenyl diphosphate from 1-deoxy-D-xylulose 5-phosphate: step 3/6. Catalyzes the phosphorylation of the position 2 hydroxy group of 4-diphosphocytidyl-2C-methyl-D-erythritol. This Bacillus cereus (strain G9842) protein is 4-diphosphocytidyl-2-C-methyl-D-erythritol kinase.